Consider the following 548-residue polypeptide: Chaperonin GroEL (548 aa).

ATP contacts are provided by residues 30-33, Lys-51, 87-91, Gly-415, 479-481, and Asp-495; these read TLGP, DGTTT, and NAA. Residues 525 to 548 are disordered; it reads PKEDKTSDASSSPAGGMGGMGGMM. A compositionally biased stretch (gly residues) spans 539 to 548; it reads GGMGGMGGMM.

It belongs to the chaperonin (HSP60) family. In terms of assembly, forms a cylinder of 14 subunits composed of two heptameric rings stacked back-to-back. Interacts with the co-chaperonin GroES.

It is found in the cytoplasm. It catalyses the reaction ATP + H2O + a folded polypeptide = ADP + phosphate + an unfolded polypeptide.. Its function is as follows. Together with its co-chaperonin GroES, plays an essential role in assisting protein folding. The GroEL-GroES system forms a nano-cage that allows encapsulation of the non-native substrate proteins and provides a physical environment optimized to promote and accelerate protein folding. The polypeptide is Chaperonin GroEL (Buchnera aphidicola subsp. Rhopalosiphum maidis).